Reading from the N-terminus, the 486-residue chain is Ribosome biogenesis protein YTM1 (486 aa).

The tract at residues 12-99 is ubiquitin-like (UBL) domain; the sequence is RQLPINLFTR…ESQIDVEYVR (88 aa). 5 WD repeats span residues 212–251, 305–345, 349–388, 392–432, and 454–486; these read GHTGPISSVIASSSGKEIVTGSWDGNINLYVLPDAEPTEH, GHTG…AGAL, PFDKSALCVDQWKMNGTLATGNMDRTICLWDTRQATSLIS, PTTS…TALF, and VLGERLLAVDWNGEVLVAGGEDGEVGIWRARGE. Residues 249-299 are disordered; it reads TEHQVPADPVSYLPGQGTKKRRKLEKDQEKAPIEGLTDGDATGEGGWRRAP.

It belongs to the WD repeat WDR12/YTM1 family. As to quaternary structure, component of the NOP7 complex, composed of ERB1, NOP7 and YTM1. The complex is held together by ERB1, which interacts with NOP7 via its N-terminal domain and with YTM1 via a high-affinity interaction between the seven-bladed beta-propeller domains of the 2 proteins. The NOP7 complex associates with the 66S pre-ribosome. Interacts (via UBL domain) with MDN1 (via VWFA/MIDAS domain).

The protein localises to the nucleus. It is found in the nucleolus. It localises to the nucleoplasm. Component of the NOP7 complex, which is required for maturation of the 25S and 5.8S ribosomal RNAs and formation of the 60S ribosome. This is Ribosome biogenesis protein YTM1 from Cryptococcus neoformans var. neoformans serotype D (strain B-3501A) (Filobasidiella neoformans).